The sequence spans 64 residues: Photosystem II reaction center protein J (64 aa).

Residues 35–55 (LWLVATAGGIAVIFVLGIFFY) form a helical membrane-spanning segment.

Belongs to the PsbJ family. As to quaternary structure, PSII is composed of 1 copy each of membrane proteins PsbA, PsbB, PsbC, PsbD, PsbE, PsbF, PsbH, PsbI, PsbJ, PsbK, PsbL, PsbM, PsbT, PsbX, PsbY, Psb30/Ycf12, peripheral proteins PsbO, CyanoQ (PsbQ), PsbU, PsbV and a large number of cofactors. It forms dimeric complexes.

Its subcellular location is the cellular thylakoid membrane. Functionally, one of the components of the core complex of photosystem II (PSII). PSII is a light-driven water:plastoquinone oxidoreductase that uses light energy to abstract electrons from H(2)O, generating O(2) and a proton gradient subsequently used for ATP formation. It consists of a core antenna complex that captures photons, and an electron transfer chain that converts photonic excitation into a charge separation. This is Photosystem II reaction center protein J from Prochlorococcus marinus (strain MIT 9515).